The following is a 378-amino-acid chain: Cobalt-precorrin-5B C(1)-methyltransferase (378 aa).

Belongs to the CbiD family.

The catalysed reaction is Co-precorrin-5B + S-adenosyl-L-methionine = Co-precorrin-6A + S-adenosyl-L-homocysteine. The protein operates within cofactor biosynthesis; adenosylcobalamin biosynthesis; cob(II)yrinate a,c-diamide from sirohydrochlorin (anaerobic route): step 6/10. Functionally, catalyzes the methylation of C-1 in cobalt-precorrin-5B to form cobalt-precorrin-6A. This Tolumonas auensis (strain DSM 9187 / NBRC 110442 / TA 4) protein is Cobalt-precorrin-5B C(1)-methyltransferase.